Consider the following 885-residue polypeptide: Translation initiation factor IF-2 (885 aa).

Disordered stretches follow at residues 135-159 and 184-289; these read KAKAEAEAKAKAEAEAKAKAKAAAE and QAEA…PESM. Residues 184-232 show a composition bias toward basic and acidic residues; the sequence is QAEATKRKQDEEAAKAAEKARLLAEENSKRWAEEERQRLEAERYSDHHI. The segment covering 253–266 has biased composition (basic residues); that stretch reads GRRARNKNTAKSKR. Residues 267-276 are compositionally biased toward basic and acidic residues; sequence GGKDARDGRE. Residues 385-554 form the tr-type G domain; that stretch reads PRAPVVTIMG…LLQAEVLELK (170 aa). The G1 stretch occupies residues 394-401; sequence GHVDHGKT. 394 to 401 provides a ligand contact to GTP; sequence GHVDHGKT. The tract at residues 419-423 is G2; sequence GITQH. The tract at residues 440-443 is G3; that stretch reads DTPG. Residues 440–444 and 494–497 contribute to the GTP site; these read DTPGH and NKMD. The G4 stretch occupies residues 494–497; the sequence is NKMD. A G5 region spans residues 530-532; it reads SAK.

This sequence belongs to the TRAFAC class translation factor GTPase superfamily. Classic translation factor GTPase family. IF-2 subfamily.

It localises to the cytoplasm. In terms of biological role, one of the essential components for the initiation of protein synthesis. Protects formylmethionyl-tRNA from spontaneous hydrolysis and promotes its binding to the 30S ribosomal subunits. Also involved in the hydrolysis of GTP during the formation of the 70S ribosomal complex. In Shewanella sp. (strain MR-7), this protein is Translation initiation factor IF-2.